The primary structure comprises 1196 residues: MDINDDLNINSPVDNKNVVIVRARKTNTFFKAFKVAPNIWVAPERYYGEPLDIAEEYKLDGGIYDSNFLSQDSERENFLQAIITLLKRINNTISGKQLLSLISTAIPFPYGYVGGGYSSPNIFTFGKTPKSNKKLNSLVTSTIPFPFGGYRETNYIESQNNKNFYASNIVIFGPGSNIVENNVICYKKNDAENGMGTMAEILFQPLLTYKYNKFYIDPAMELTKCLIKSLYFLYGIKPSDDLVVPYRLRTELDNKQFSQLNIIDLLISGGVDLEFINTNPYWFTNSYFSNSIKMFEKYKNIYETEIEGNNAIGNDIKLRLKQKFQNSVQDIWNLNLNYFSKEFNSIIPDRFSNALKHFYRKQYYTMDYGDNYNINGFVNGQINTKLPLSDKNTNIISKPEKVVNLVNANNISLMKSNIYGDGLKGTTEDFYSTYKIPYNEEYEYRFNDSDNFPLNNISIEEVDSIPEIIDINPYKDNSDDLLFTQITSTTEEVITHTALPVNYLQAQIITNENFTLSSDFSKVVSSKDKSLVYSFLDNLMSYLETIKNDGPIDTDKKYYLWLKEVFKNYSFDINLTQEIDSSCGINEVVIWFGKALNILNTSNSFVEEYQNSGPISLISKKDNLSEPNIEIDDIPDSLLGLSFKDLNNKLYEIYSKNRVYFRKIYFNFLDQWWTEYYSQYFELICMAKQSILAQESVVKQIIQNKFTDLSKASIPPDTLKLIKETTEKTFIDLSNESQISMNRVDNFLNKASICVFVEDIYPKFISYMEKYINNINIKTREFIQRCTNINDNEKSILINSYTFKTIDFKFLNIQAIKNFFNSQVEQVMKEMLSPYQLLLFATRGPNSNIIEDISGKNTLIQYTESVELVYGVNGESLYLKSPNETVEFSNNFFTNGLTNNFTICFWLRFTGKDDDKTRLIGNKVNNCGWEIYFEDNGLVFEIIDSNGNQESVYLSNVINNNWYYISISVDRLKDQLLIFINDKNVANVSIEQILNIYSTNVISLVNKNNSIYVEELSVLDKPVASEEVIRNYFSYLDNSYIRDSSKSLLEYNKNYQLYNYVFPETSLYEVNDNNKSYLSLKNTDGINIPSVKFKLINIDESKGYVQKWDECIICVSDGTEKYLDISPENNRIQLVSSKDNAKKITVNTDLFRPDCITFSYNDKYFSLSLRDGDYNWMICNDNNKVPKGAHLWILKS.

The segment at 1-408 (MDINDDLNIN…PEKVVNLVNA (408 aa)) is light chain nLC. An N-heavy chain nHN region spans residues 409–828 (NNISLMKSNI…FFNSQVEQVM (420 aa)). Cys583 and Cys754 are oxidised to a cystine. Positions 829–1195 (KEMLSPYQLL…PKGAHLWILK (367 aa)) are C-heavy chain nHC.

The protein belongs to the botulism non-toxic nonhemagglutinin family. Forms a highly interlocked heterodimer with botulinum neurotoxin type C at pH 6.0 but not at pH 7.5. Botulinum toxins are produced as progenitor toxins of large molecular sizes of 12S (M toxin) and 16S (L toxin). M toxin consists of a non-toxic, non-hemagglutinin component (NTNHA) and the neurotoxin. L toxin consists of the M toxin and the 3 subcomponents of hemagglutinin (HA). HA is composed of subcomponents of 70, 33, and 17 kDa. Erythrocyte agglutination occurs when the entire complex is assembled. The stoichiometry of the whole complex has been modeled as one BoNT/D, one NTNHA, three HA-70, six HA-33 and three HA-17.

It localises to the secreted. Assembles with botulinum neurotoxin type D (BoNT/D) and protects it against pH-mediated inactivation or protease activity at pH 2.6 (the pH of the animal gastrointestinal tract) but not at pH 6.0. The non-toxic component is necessary to maintain toxicity. This Clostridium botulinum (Clostridium botulinum D bacteriophage) protein is Non-toxic nonhemagglutinin type D (ntnha).